Here is a 470-residue protein sequence, read N- to C-terminus: Argininosuccinate lyase (470 aa).

The protein belongs to the lyase 1 family. Argininosuccinate lyase subfamily.

Its subcellular location is the cytoplasm. The catalysed reaction is 2-(N(omega)-L-arginino)succinate = fumarate + L-arginine. It functions in the pathway amino-acid biosynthesis; L-arginine biosynthesis; L-arginine from L-ornithine and carbamoyl phosphate: step 3/3. In Mycobacterium marinum (strain ATCC BAA-535 / M), this protein is Argininosuccinate lyase.